The chain runs to 305 residues: Putative S-adenosyl-L-methionine-dependent methyltransferase MAB_4607c (305 aa).

Residues Asp-128 and 155 to 156 (DL) contribute to the S-adenosyl-L-methionine site.

Belongs to the UPF0677 family.

Exhibits S-adenosyl-L-methionine-dependent methyltransferase activity. The polypeptide is Putative S-adenosyl-L-methionine-dependent methyltransferase MAB_4607c (Mycobacteroides abscessus (strain ATCC 19977 / DSM 44196 / CCUG 20993 / CIP 104536 / JCM 13569 / NCTC 13031 / TMC 1543 / L948) (Mycobacterium abscessus)).